Consider the following 263-residue polypeptide: Pimeloyl-[acyl-carrier protein] methyl ester esterase (263 aa).

Residues W23, 90–91, and 152–156 contribute to the substrate site; these read SL and FLTLQ. The active-site Nucleophile is S90. Active-site residues include D216 and H244. H244 is a substrate binding site.

Belongs to the AB hydrolase superfamily. Carboxylesterase BioH family. Monomer.

The protein resides in the cytoplasm. The catalysed reaction is 6-carboxyhexanoyl-[ACP] methyl ester + H2O = 6-carboxyhexanoyl-[ACP] + methanol + H(+). It functions in the pathway cofactor biosynthesis; biotin biosynthesis. Its function is as follows. The physiological role of BioH is to remove the methyl group introduced by BioC when the pimeloyl moiety is complete. It allows to synthesize pimeloyl-ACP via the fatty acid synthetic pathway through the hydrolysis of the ester bonds of pimeloyl-ACP esters. The sequence is that of Pimeloyl-[acyl-carrier protein] methyl ester esterase from Nitrosospira multiformis (strain ATCC 25196 / NCIMB 11849 / C 71).